The chain runs to 259 residues: Isoepoxydon dehydrogenase patN (259 aa).

Residues D69, N96, and K125 each contribute to the NADP(+) site. Active-site proton donor residues include S143 and S144. Residues Y158, K162, and V191 each coordinate NADP(+). Y158 acts as the Proton acceptor in catalysis. K162 serves as the catalytic Lowers pKa of active site Tyr.

This sequence belongs to the short-chain dehydrogenases/reductases (SDR) family.

It localises to the cytoplasm. The protein resides in the cytosol. The catalysed reaction is isoepoxydon + NADP(+) = phyllostine + NADPH + H(+). It participates in mycotoxin biosynthesis; patulin biosynthesis. Functionally, isoepoxydon dehydrogenase; part of the gene cluster that mediates the biosynthesis of patulin, an acetate-derived tetraketide mycotoxin produced by several fungal species that shows antimicrobial properties against several bacteria. PatN catalyzes the conversion of isoepoxydon into phyllostine. The pathway begins with the synthesis of 6-methylsalicylic acid by the polyketide synthase (PKS) patK via condensation of acetate and malonate units. The 6-methylsalicylic acid decarboxylase patG then catalyzes the decarboxylation of 6-methylsalicylic acid to yield m-cresol (also known as 3-methylphenol). These first reactions occur in the cytosol. The intermediate m-cresol is then transported into the endoplasmic reticulum where the cytochrome P450 monooxygenase patH converts it to m-hydroxybenzyl alcohol, which is further converted to gentisyl alcohol by the cytochrome P450 monooxygenase patI. The oxidoreductases patJ and patO further convert gentisyl alcohol to isoepoxydon in the vacuole. PatN catalyzes then the transformation of isoepoxydon into phyllostine. The cluster protein patF is responsible for the conversion from phyllostine to neopatulin whereas the alcohol dehydrogenase patD converts neopatulin to E-ascladiol. The steps between isoepoxydon and E-ascladiol occur in the cytosol, and E-ascladiol is probably secreted to the extracellular space by one of the cluster-specific transporters patC or patM. Finally, the secreted patulin synthase patE catalyzes the conversion of E-ascladiol to patulin. The protein is Isoepoxydon dehydrogenase patN of Penicillium expansum (Blue mold rot fungus).